The sequence spans 178 residues: uncharacterized protein (178 aa).

This is an uncharacterized protein from Cestrum parqui (CmYLCV).